Here is a 328-residue protein sequence, read N- to C-terminus: Methionyl-tRNA formyltransferase (328 aa).

Residue 121–124 (SLLP) participates in (6S)-5,6,7,8-tetrahydrofolate binding.

Belongs to the Fmt family.

It carries out the reaction L-methionyl-tRNA(fMet) + (6R)-10-formyltetrahydrofolate = N-formyl-L-methionyl-tRNA(fMet) + (6S)-5,6,7,8-tetrahydrofolate + H(+). Attaches a formyl group to the free amino group of methionyl-tRNA(fMet). The formyl group appears to play a dual role in the initiator identity of N-formylmethionyl-tRNA by promoting its recognition by IF2 and preventing the misappropriation of this tRNA by the elongation apparatus. This is Methionyl-tRNA formyltransferase from Burkholderia thailandensis (strain ATCC 700388 / DSM 13276 / CCUG 48851 / CIP 106301 / E264).